Consider the following 216-residue polypeptide: Capsule polysaccharide export ATP-binding protein CtrD (216 aa).

The 214-residue stretch at 2–215 (ISVEHVSKRY…DKAYEYYNSL (214 aa)) folds into the ABC transporter domain. An ATP-binding site is contributed by 38–45 (GRNGAGKS).

This sequence belongs to the ABC transporter superfamily.

It is found in the cell inner membrane. It catalyses the reaction ATP + H2O + capsular polysaccharide-[capsular polysaccharide-binding protein]Side 1 = ADP + phosphate + capsular polysaccharideSide 2 + [capsular polysaccharide-binding protein]Side 1.. Putative ATP-binding protein, and an energy-coupling component of capsule polysaccharide export apparatus. The chain is Capsule polysaccharide export ATP-binding protein CtrD (ctrD) from Neisseria meningitidis serogroup B (strain ATCC BAA-335 / MC58).